A 428-amino-acid chain; its full sequence is Serine--tRNA ligase (428 aa).

235–237 (TAE) provides a ligand contact to L-serine. 266-268 (RSE) serves as a coordination point for ATP. Glutamate 289 is an L-serine binding site. 353-356 (EISS) is an ATP binding site. Serine 389 provides a ligand contact to L-serine.

The protein belongs to the class-II aminoacyl-tRNA synthetase family. Type-1 seryl-tRNA synthetase subfamily. As to quaternary structure, homodimer. The tRNA molecule binds across the dimer.

The protein localises to the cytoplasm. It carries out the reaction tRNA(Ser) + L-serine + ATP = L-seryl-tRNA(Ser) + AMP + diphosphate + H(+). It catalyses the reaction tRNA(Sec) + L-serine + ATP = L-seryl-tRNA(Sec) + AMP + diphosphate + H(+). It functions in the pathway aminoacyl-tRNA biosynthesis; selenocysteinyl-tRNA(Sec) biosynthesis; L-seryl-tRNA(Sec) from L-serine and tRNA(Sec): step 1/1. Functionally, catalyzes the attachment of serine to tRNA(Ser). Is also able to aminoacylate tRNA(Sec) with serine, to form the misacylated tRNA L-seryl-tRNA(Sec), which will be further converted into selenocysteinyl-tRNA(Sec). This is Serine--tRNA ligase from Shewanella piezotolerans (strain WP3 / JCM 13877).